The following is a 96-amino-acid chain: DNA-binding protein Saci_1468 (96 aa).

Belongs to the PDCD5 family.

This is DNA-binding protein Saci_1468 from Sulfolobus acidocaldarius (strain ATCC 33909 / DSM 639 / JCM 8929 / NBRC 15157 / NCIMB 11770).